The sequence spans 281 residues: Proteasome subunit beta (281 aa).

Positions 1–53 (MEANTRSTGRLPAAFLTPGSSSFMDFLSDHQPELLPGKRQLPPTQGVIEAPHG) are cleaved as a propeptide — removed in mature form; by autocatalysis. The Nucleophile role is filled by threonine 54.

It belongs to the peptidase T1B family. As to quaternary structure, the 20S proteasome core is composed of 14 alpha and 14 beta subunits that assemble into four stacked heptameric rings, resulting in a barrel-shaped structure. The two inner rings, each composed of seven catalytic beta subunits, are sandwiched by two outer rings, each composed of seven alpha subunits. The catalytic chamber with the active sites is on the inside of the barrel. Has a gated structure, the ends of the cylinder being occluded by the N-termini of the alpha-subunits. Is capped by the proteasome-associated ATPase, ARC.

The protein localises to the cytoplasm. The catalysed reaction is Cleavage of peptide bonds with very broad specificity.. It participates in protein degradation; proteasomal Pup-dependent pathway. Its activity is regulated as follows. The formation of the proteasomal ATPase ARC-20S proteasome complex, likely via the docking of the C-termini of ARC into the intersubunit pockets in the alpha-rings, may trigger opening of the gate for substrate entry. Interconversion between the open-gate and close-gate conformations leads to a dynamic regulation of the 20S proteasome proteolysis activity. Its function is as follows. Component of the proteasome core, a large protease complex with broad specificity involved in protein degradation. The sequence is that of Proteasome subunit beta from Streptomyces scabiei (strain 87.22).